The following is a 218-amino-acid chain: MRIFLDTANIEEIKKAVAWGVIDGVTTNPTLIAREKAPFTERIKEICETVKGPVSAEVVALDYEGMVKEARDLAMLDEHVVIKIPMTPEGIKAVKTLSSEGIKTNVTLVFSAVQALLAAKAGATYVSPFIGRVDDISSDGLRLVEDIVAIFSNYGFQTNVLAASIRHPMHVLELATIGVDIVTMPFNVLEKLFHHPLTDKGIERFLNDWEEYRKGTGL.

Catalysis depends on K83, which acts as the Schiff-base intermediate with substrate.

The protein belongs to the transaldolase family. Type 3B subfamily.

Its subcellular location is the cytoplasm. The enzyme catalyses D-sedoheptulose 7-phosphate + D-glyceraldehyde 3-phosphate = D-erythrose 4-phosphate + beta-D-fructose 6-phosphate. Its pathway is carbohydrate degradation; pentose phosphate pathway; D-glyceraldehyde 3-phosphate and beta-D-fructose 6-phosphate from D-ribose 5-phosphate and D-xylulose 5-phosphate (non-oxidative stage): step 2/3. Transaldolase is important for the balance of metabolites in the pentose-phosphate pathway. The sequence is that of Probable transaldolase from Kosmotoga olearia (strain ATCC BAA-1733 / DSM 21960 / TBF 19.5.1).